The chain runs to 444 residues: S-locus-specific glycoprotein BS29-1 (444 aa).

An N-terminal signal peptide occupies residues 1 to 28 (MRGVIPNYHHSYTLLFFVILVLFPHVFS). The Bulb-type lectin domain maps to 31-159 (TLSPNEALTI…KTTALDRFMW (129 aa)). 5 N-linked (GlcNAc...) asparagine glycosylation sites follow: asparagine 43, asparagine 125, asparagine 180, asparagine 243, and asparagine 396. The PAN domain occupies 356–437 (CGEGDGFLRM…GGQDLYLKVA (82 aa)). Intrachain disulfides connect cysteine 387-cysteine 412 and cysteine 395-cysteine 397.

In terms of tissue distribution, stigma.

Involved in sporophytic self-incompatibility system (the inability of flowering plants to achieve self-fertilization). The chain is S-locus-specific glycoprotein BS29-1 (SLSG) from Brassica oleracea var. alboglabra (Chinese kale).